Here is a 566-residue protein sequence, read N- to C-terminus: MDLHRAAFKMENSSYLPNPLASPALMVLASTAEASRDASIPCQQPRPFGVPVSVDKDVHIPFTNGSYTFASMYHRQGGVPGTFANRDFPPSLLHLHPQFAPPNLDCTPISMLNHSGVGAFRPFASTEDRESYQSAFTPAKRLKNCHDTESPHLRFSDADGKEYDFGTQLPSSSPGSLKVDDTGKKIFAVSGLISDREASSSPEDRNDRCKKKAAALFDSQAPICPICQVLLRPSELQEHMEQELEQLAQLPSSKNSLLKDAMAPGTPKSLLLSASIKREGESPTASPHSSATDDLHHSDRYQTFLRVRANRQTRLNARIGKMKRRKQDEGQREGSCMAEDDAVDIEHENNNRFEEYEWCGQKRIRATTLLEGGFRGSGFIMCSGKENPDSDADLDVDGDDTLEYGKPQYTEADVIPCTGEEPGEAKEREALRGAVLNGGPPSTRITPEFSKWASDEMPSTSNGESSKQEAMQKTCKNSDIEKITEDSAVTTFEALKARVRELERQLSRGDRYKCLICMDSYSMPLTSIQCWHVHCEECWLRTLGAKKLCPQCNTITAPGDLRRIYL.

Residue lysine 277 forms a Glycyl lysine isopeptide (Lys-Gly) (interchain with G-Cter in SUMO2) linkage. The segment at lysine 277–histidine 297 is disordered. At serine 390 the chain carries Phosphoserine. The stretch at glutamate 485–lysine 513 forms a coiled coil. The segment at cysteine 514–serine 522 is required for targeting to the cytoplasm. Residues cysteine 514–asparagine 553 form an RING-type zinc finger.

As to quaternary structure, interacts with SIN3B. Interacts with CTNNB1 (via Armadillo repeats 2-8). Interacts with USP7 (via MATH domain). In terms of processing, auto-ubiquitinated; leads to proteasomal degradation. Ubiquitously expressed. Abundant in brain and spinal cord, particularly in the cerebellum and cerebral cortex. In fetal tissues expressed in the cerebellum, spinal cord and cortex.

Its subcellular location is the cytoplasm. It is found in the nucleus. It carries out the reaction S-ubiquitinyl-[E2 ubiquitin-conjugating enzyme]-L-cysteine + [acceptor protein]-L-lysine = [E2 ubiquitin-conjugating enzyme]-L-cysteine + N(6)-ubiquitinyl-[acceptor protein]-L-lysine.. Its pathway is protein modification; protein ubiquitination. Its function is as follows. E3 ubiquitin-protein ligase that promotes the ubiquitination and proteasomal degradation of SIN3B. Independently of its E3 ligase activity, acts as a CTNNB1 stabilizer through USP7-mediated deubiquitination of CTNNB1 promoting Wnt signaling. Plays a critical role in the regulation of nuclear lamina. This is E3 ubiquitin-protein ligase RNF220 (RNF220) from Homo sapiens (Human).